The chain runs to 98 residues: DNA-directed RNA polymerase subunit omega (98 aa).

It belongs to the RNA polymerase subunit omega family. The RNAP catalytic core consists of 2 alpha, 1 beta, 1 beta' and 1 omega subunit. When a sigma factor is associated with the core the holoenzyme is formed, which can initiate transcription.

It catalyses the reaction RNA(n) + a ribonucleoside 5'-triphosphate = RNA(n+1) + diphosphate. Promotes RNA polymerase assembly. Latches the N- and C-terminal regions of the beta' subunit thereby facilitating its interaction with the beta and alpha subunits. This Tropheryma whipplei (strain Twist) (Whipple's bacillus) protein is DNA-directed RNA polymerase subunit omega.